Consider the following 162-residue polypeptide: 2-C-methyl-D-erythritol 2,4-cyclodiphosphate synthase (162 aa).

Positions 12 and 14 each coordinate a divalent metal cation. 4-CDP-2-C-methyl-D-erythritol 2-phosphate-binding positions include 12-14 (DVH) and 38-39 (HS). Histidine 46 lines the a divalent metal cation pocket. 4-CDP-2-C-methyl-D-erythritol 2-phosphate contacts are provided by residues 60 to 62 (DIG), 65 to 69 (FPDTD), and arginine 146.

Belongs to the IspF family. In terms of assembly, homotrimer. A divalent metal cation serves as cofactor.

It carries out the reaction 4-CDP-2-C-methyl-D-erythritol 2-phosphate = 2-C-methyl-D-erythritol 2,4-cyclic diphosphate + CMP. It functions in the pathway isoprenoid biosynthesis; isopentenyl diphosphate biosynthesis via DXP pathway; isopentenyl diphosphate from 1-deoxy-D-xylulose 5-phosphate: step 4/6. In terms of biological role, involved in the biosynthesis of isopentenyl diphosphate (IPP) and dimethylallyl diphosphate (DMAPP), two major building blocks of isoprenoid compounds. Catalyzes the conversion of 4-diphosphocytidyl-2-C-methyl-D-erythritol 2-phosphate (CDP-ME2P) to 2-C-methyl-D-erythritol 2,4-cyclodiphosphate (ME-CPP) with a corresponding release of cytidine 5-monophosphate (CMP). The polypeptide is 2-C-methyl-D-erythritol 2,4-cyclodiphosphate synthase (Bordetella avium (strain 197N)).